Reading from the N-terminus, the 200-residue chain is Peroxiredoxin (200 aa).

The Thioredoxin domain maps to Ala-6–His-165. Cys-52 serves as the catalytic Cysteine sulfenic acid (-SOH) intermediate.

This sequence belongs to the peroxiredoxin family. AhpC/Prx1 subfamily. In terms of assembly, homodimer; disulfide-linked, upon oxidation.

The catalysed reaction is a hydroperoxide + [thioredoxin]-dithiol = an alcohol + [thioredoxin]-disulfide + H2O. In terms of biological role, thiol-specific peroxidase that catalyzes the reduction of hydrogen peroxide and organic hydroperoxides to water and alcohols, respectively. Plays a role in cell protection against oxidative stress by detoxifying peroxides and as sensor of hydrogen peroxide-mediated signaling events. This is Peroxiredoxin from Cynops pyrrhogaster (Japanese fire-bellied newt).